Reading from the N-terminus, the 490-residue chain is Cardiolipin synthase 1 (490 aa).

The next 2 membrane-spanning stretches (helical) occupy residues 9 to 29 and 42 to 62; these read ILTI…FVII and WAWL…YLFL. PLD phosphodiesterase domains follow at residues 225–252 and 403–430; these read MNNR…GDDY and QNGF…DFRS. Catalysis depends on residues His-230, Lys-232, Asp-237, His-408, Lys-410, and Asp-415.

The protein belongs to the phospholipase D family. Cardiolipin synthase subfamily.

The protein localises to the cell membrane. It catalyses the reaction 2 a 1,2-diacyl-sn-glycero-3-phospho-(1'-sn-glycerol) = a cardiolipin + glycerol. Catalyzes the reversible phosphatidyl group transfer from one phosphatidylglycerol molecule to another to form cardiolipin (CL) (diphosphatidylglycerol) and glycerol. In Staphylococcus epidermidis (strain ATCC 12228 / FDA PCI 1200), this protein is Cardiolipin synthase 1 (cls1).